The sequence spans 120 residues: Large ribosomal subunit protein uL18 (120 aa).

Residues 1-26 (MSKAKVTNARRKRSVRLKLRRSGGGR) are disordered. Residues 8–23 (NARRKRSVRLKLRRSG) show a composition bias toward basic residues.

Belongs to the universal ribosomal protein uL18 family. In terms of assembly, part of the 50S ribosomal subunit; part of the 5S rRNA/L5/L18/L25 subcomplex. Contacts the 5S and 23S rRNAs.

In terms of biological role, this is one of the proteins that bind and probably mediate the attachment of the 5S RNA into the large ribosomal subunit, where it forms part of the central protuberance. The sequence is that of Large ribosomal subunit protein uL18 from Bradyrhizobium diazoefficiens (strain JCM 10833 / BCRC 13528 / IAM 13628 / NBRC 14792 / USDA 110).